We begin with the raw amino-acid sequence, 469 residues long: Adenosylhomocysteinase (469 aa).

3 residues coordinate substrate: Thr-58, Asp-133, and Glu-195. Residue 196-198 coordinates NAD(+); sequence TTT. Residues Lys-225 and Asp-229 each coordinate substrate. NAD(+) contacts are provided by residues Asn-230, 259–264, Glu-282, Asn-317, 338–340, and Asn-383; these read GFGDVG and IGH.

The protein belongs to the adenosylhomocysteinase family. NAD(+) is required as a cofactor.

It is found in the cytoplasm. The catalysed reaction is S-adenosyl-L-homocysteine + H2O = L-homocysteine + adenosine. Its pathway is amino-acid biosynthesis; L-homocysteine biosynthesis; L-homocysteine from S-adenosyl-L-homocysteine: step 1/1. In terms of biological role, may play a key role in the regulation of the intracellular concentration of adenosylhomocysteine. The polypeptide is Adenosylhomocysteinase (Rhodopseudomonas palustris (strain ATCC BAA-98 / CGA009)).